The primary structure comprises 308 residues: Ribosomal RNA large subunit methyltransferase F (308 aa).

The segment at 190–212 (DSAASARAGSERKRRNLGQDKND) is disordered.

It belongs to the methyltransferase superfamily. METTL16/RlmF family.

The protein localises to the cytoplasm. The enzyme catalyses adenosine(1618) in 23S rRNA + S-adenosyl-L-methionine = N(6)-methyladenosine(1618) in 23S rRNA + S-adenosyl-L-homocysteine + H(+). In terms of biological role, specifically methylates the adenine in position 1618 of 23S rRNA. The sequence is that of Ribosomal RNA large subunit methyltransferase F from Citrobacter koseri (strain ATCC BAA-895 / CDC 4225-83 / SGSC4696).